The following is a 246-amino-acid chain: UL16-binding protein 2 (246 aa).

A signal peptide spans 1–25; that stretch reads MAAAAATKILLCLPLLLLLSGWSRA. Positions 29-117 are MHC class I alpha-1 like; sequence DPHSLCYDIT…IQLENYTPKE (89 aa). Cys50 and Cys66 form a disulfide bridge. 2 N-linked (GlcNAc...) asparagine glycosylation sites follow: Asn68 and Asn82. The tract at residues 118 to 210 is MHC class I alpha-2 like; that stretch reads PLTLQARMSC…MDSTLEPSAG (93 aa). A disulfide bridge links Cys127 with Cys190. Ser216 serves as a coordination point for a protein. Ser217 carries the GPI-anchor amidated serine lipid modification. The propeptide at 218-246 is removed in mature form; it reads GTTQLRATATTLILCCLLIILPCFILPGI.

The protein belongs to the MHC class I family. In terms of assembly, interacts with KLRK1/NKG2D. Does not bind to beta2-microglobulin. (Microbial infection) In CMV-infected cells, interacts with the viral glycoprotein UL16; this interaction causes ULBP2 retention in the endoplasmic reticulum and cis-Golgi and prevents binding to and activation of KLRK1/NKG2D, providing CMV with an immune evasion mechanism. As to expression, expressed in various types of cancer cell lines and in the fetus, but not in normal tissues.

It is found in the cell membrane. The protein localises to the endoplasmic reticulum. Its subcellular location is the secreted. Binds and activates the KLRK1/NKG2D receptor, mediating natural killer cell cytotoxicity. The sequence is that of UL16-binding protein 2 from Homo sapiens (Human).